The primary structure comprises 269 residues: MDKYAVFGNPIKHSKSPFIHTLFARQTMQDLEYSAIEAPINGFVESVTAFFSQQGKGCNVTVPFKEEAFQFADQLTERAKLAGAVNTLKKLDDGIILGDNTDGEGLVQDLLQYQVPLEDKHILLIGAGGAARGVILPLLKQNPASITLVNRTYEKAKQLAELFSPYGRIEAKKMSDINKGFDVIINSTSASLSGELPQIDPVIFSGGAISYDMMYGSGKTIFNQWALKNDAYQAYDGLGMLVGQAAESFTVWRGLRPGSKQILRELRKT.

Shikimate is bound by residues 14–16 (SKS) and Thr-61. Lys-65 acts as the Proton acceptor in catalysis. Residue Glu-77 coordinates NADP(+). The shikimate site is built by Asn-86 and Asp-102. Residues 126-130 (GAGGA), 150-155 (NRTYEK), and Met-213 contribute to the NADP(+) site. A shikimate-binding site is contributed by Tyr-215. Gly-237 provides a ligand contact to NADP(+).

The protein belongs to the shikimate dehydrogenase family. In terms of assembly, homodimer.

It catalyses the reaction shikimate + NADP(+) = 3-dehydroshikimate + NADPH + H(+). Its pathway is metabolic intermediate biosynthesis; chorismate biosynthesis; chorismate from D-erythrose 4-phosphate and phosphoenolpyruvate: step 4/7. Functionally, involved in the biosynthesis of the chorismate, which leads to the biosynthesis of aromatic amino acids. Catalyzes the reversible NADPH linked reduction of 3-dehydroshikimate (DHSA) to yield shikimate (SA). In Aliivibrio fischeri (strain ATCC 700601 / ES114) (Vibrio fischeri), this protein is Shikimate dehydrogenase (NADP(+)).